A 347-amino-acid chain; its full sequence is Secretory carrier-associated membrane protein 3 (347 aa).

Residues methionine 1–threonine 88 form a disordered region. Over methionine 1–leucine 170 the chain is Cytoplasmic. Serine 32 bears the Phosphoserine mark. The residue at position 37 (threonine 37) is a Phosphothreonine. 2 positions are modified to phosphotyrosine: tyrosine 41 and tyrosine 53. Pro residues predominate over residues proline 49 to alanine 66. Phosphoserine occurs at positions 72 and 76. Tyrosine 83 bears the Phosphotyrosine mark. Serine 85 is subject to Phosphoserine. 4 helical membrane-spanning segments follow: residues tryptophan 171–valine 191, alanine 197–tryptophan 217, phenylalanine 247–valine 267, and valine 277–leucine 297. The Cytoplasmic portion of the chain corresponds to lysine 298–proline 347. Residue lysine 313 forms a Glycyl lysine isopeptide (Lys-Gly) (interchain with G-Cter in SUMO1) linkage.

This sequence belongs to the SCAMP family. As to quaternary structure, interacts with NEDD4, NEDD4L and TSG101. Interacts with RNF126. Post-translationally, monoubiquitinated. As to expression, widely expressed, with highest expression in heart and skeletal muscle.

The protein resides in the membrane. Functionally, functions in post-Golgi recycling pathways. Acts as a recycling carrier to the cell surface. In Homo sapiens (Human), this protein is Secretory carrier-associated membrane protein 3 (SCAMP3).